Reading from the N-terminus, the 192-residue chain is Molybdenum cofactor guanylyltransferase (192 aa).

3 residues coordinate GTP: K21, D67, and D101. D101 is a binding site for Mg(2+).

This sequence belongs to the MobA family. As to quaternary structure, monomer. The cofactor is Mg(2+).

It localises to the cytoplasm. The catalysed reaction is Mo-molybdopterin + GTP + H(+) = Mo-molybdopterin guanine dinucleotide + diphosphate. Functionally, transfers a GMP moiety from GTP to Mo-molybdopterin (Mo-MPT) cofactor (Moco or molybdenum cofactor) to form Mo-molybdopterin guanine dinucleotide (Mo-MGD) cofactor. In Neisseria meningitidis serogroup C / serotype 2a (strain ATCC 700532 / DSM 15464 / FAM18), this protein is Molybdenum cofactor guanylyltransferase.